Consider the following 270-residue polypeptide: Ribitol operon repressor (270 aa).

The HTH lacI-type domain maps to 1–61 (MKKITIYDLA…INRQASMLRS (61 aa)). The segment at residues 6–25 (IYDLAELSGVSASAVSAILN) is a DNA-binding region (H-T-H motif).

In terms of biological role, repressor for the genes of the ribitol operon. Binds D-ribulose as an inducer. This chain is Ribitol operon repressor (rbtR), found in Klebsiella aerogenes (Enterobacter aerogenes).